A 246-amino-acid polypeptide reads, in one-letter code: Small ribosomal subunit protein uS2 (246 aa).

It belongs to the universal ribosomal protein uS2 family.

The sequence is that of Small ribosomal subunit protein uS2 from Chromohalobacter salexigens (strain ATCC BAA-138 / DSM 3043 / CIP 106854 / NCIMB 13768 / 1H11).